We begin with the raw amino-acid sequence, 381 residues long: Deoxyguanosinetriphosphate triphosphohydrolase-like protein (381 aa).

Residues 76-203 enclose the HD domain; it reads RMTHTLEVAG…ADLSDEIAYT (128 aa).

It belongs to the dGTPase family. Type 2 subfamily.

The sequence is that of Deoxyguanosinetriphosphate triphosphohydrolase-like protein from Leptospira interrogans serogroup Icterohaemorrhagiae serovar copenhageni (strain Fiocruz L1-130).